An 868-amino-acid chain; its full sequence is Alanine--tRNA ligase (868 aa).

The Zn(2+) site is built by histidine 553, histidine 557, cysteine 657, and histidine 661. The disordered stretch occupies residues 831 to 851 (GGKGGGRADMAQAGGSRPQAL).

This sequence belongs to the class-II aminoacyl-tRNA synthetase family. It depends on Zn(2+) as a cofactor.

Its subcellular location is the cytoplasm. The catalysed reaction is tRNA(Ala) + L-alanine + ATP = L-alanyl-tRNA(Ala) + AMP + diphosphate. Catalyzes the attachment of alanine to tRNA(Ala) in a two-step reaction: alanine is first activated by ATP to form Ala-AMP and then transferred to the acceptor end of tRNA(Ala). Also edits incorrectly charged Ser-tRNA(Ala) and Gly-tRNA(Ala) via its editing domain. The protein is Alanine--tRNA ligase of Chromohalobacter salexigens (strain ATCC BAA-138 / DSM 3043 / CIP 106854 / NCIMB 13768 / 1H11).